Reading from the N-terminus, the 487-residue chain is Protein nucleotidyltransferase YdiU (487 aa).

Positions 86, 88, 89, 109, 121, 122, 172, and 179 each coordinate ATP. Aspartate 248 serves as the catalytic Proton acceptor. Residues asparagine 249 and aspartate 258 each coordinate Mg(2+). Aspartate 258 contacts ATP.

It belongs to the SELO family. Mg(2+) is required as a cofactor. The cofactor is Mn(2+).

It catalyses the reaction L-seryl-[protein] + ATP = 3-O-(5'-adenylyl)-L-seryl-[protein] + diphosphate. The enzyme catalyses L-threonyl-[protein] + ATP = 3-O-(5'-adenylyl)-L-threonyl-[protein] + diphosphate. The catalysed reaction is L-tyrosyl-[protein] + ATP = O-(5'-adenylyl)-L-tyrosyl-[protein] + diphosphate. It carries out the reaction L-histidyl-[protein] + UTP = N(tele)-(5'-uridylyl)-L-histidyl-[protein] + diphosphate. It catalyses the reaction L-seryl-[protein] + UTP = O-(5'-uridylyl)-L-seryl-[protein] + diphosphate. The enzyme catalyses L-tyrosyl-[protein] + UTP = O-(5'-uridylyl)-L-tyrosyl-[protein] + diphosphate. Its function is as follows. Nucleotidyltransferase involved in the post-translational modification of proteins. It can catalyze the addition of adenosine monophosphate (AMP) or uridine monophosphate (UMP) to a protein, resulting in modifications known as AMPylation and UMPylation. This is Protein nucleotidyltransferase YdiU from Sphingopyxis alaskensis (strain DSM 13593 / LMG 18877 / RB2256) (Sphingomonas alaskensis).